A 240-amino-acid polypeptide reads, in one-letter code: EF-hand domain-containing protein D1 (240 aa).

The interval 17–54 is disordered; it reads EVRAETDQGDPQPAPCDAPAGHPEPEPPARAPTASADS. 2 consecutive EF-hand domains span residues 91–126 and 127–162; these read RLLK…LGAP and QTHL…AAAG. The Ca(2+) site is built by aspartate 104, aspartate 108, glutamate 115, aspartate 140, aspartate 142, aspartate 144, lysine 146, and glutamate 151.

As to expression, widely expressed. Highest expression in testis, followed by ovary, kidney, cerebrum, cerebellum, heart, liver, and spleen. In the cerebrum and cerebellum, undetectable at embryonic stages, expression increases after birth up to adult stage. In adult CNS, detected in neurons of the cerebellum, cerebrum and hippocampus formation, including dentate gyrus and Cornu Ammonis, but not in the white matter. In the testis, expressed in spermatocytes, but not in spermatogonia nor in interstitial cells. In ovary, found predominantly in mural granulosa cells and those of the cumulus oophorus. In kidney, expressed in collecting ducts, but not in glomeruli. Not detected in skeletal muscle.

The protein localises to the mitochondrion inner membrane. Its function is as follows. Acts as a calcium sensor for mitochondrial flash (mitoflash) activation, an event characterized by stochastic bursts of superoxide production. May play a role in neuronal differentiation. This chain is EF-hand domain-containing protein D1 (Efhd1), found in Mus musculus (Mouse).